The chain runs to 324 residues: MLEQVILFTIIMGFLISVLISPILIPFLRRLKFGQSIREEGPKSHMKKSGTPTMGGVMIIVSIAITAIVMTQKFSHLSAEMFLLLFVTIGYGLLGFLDDYIKVVMKRNLGLTSKQKLIGQIIIAIVFYGVYHYCHFSTGIRVPGTHLSIDLGWGYFILVLFMLVGGSNAVNLTDGLDGLLSGTAAIAFGAFAILAWNQSQYDVAIFSVAVVGAVLGFLVFNAHPAKVFMGDTGSLALGGAIVTVAILTKLEILLVIIGGVFVIETLSVILQVISFKTTGKRIFKMSPLHHHYELVGWSEWRVVVTFWTAGLLLAVLGIYIEVWL.

The next 10 membrane-spanning stretches (helical) occupy residues 5-25 (VILF…PILI), 50-70 (GTPT…AIVM), 77-97 (LSAE…LGFL), 117-137 (LIGQ…CHFS), 147-167 (LSID…VGGS), 176-196 (LDGL…ILAW), 203-223 (VAIF…FNAH), 227-247 (VFMG…VAIL), 250-270 (LEIL…SVIL), and 302-322 (VVVT…YIEV).

The protein belongs to the glycosyltransferase 4 family. MraY subfamily. Mg(2+) is required as a cofactor.

It is found in the cell membrane. The enzyme catalyses UDP-N-acetyl-alpha-D-muramoyl-L-alanyl-gamma-D-glutamyl-meso-2,6-diaminopimeloyl-D-alanyl-D-alanine + di-trans,octa-cis-undecaprenyl phosphate = di-trans,octa-cis-undecaprenyl diphospho-N-acetyl-alpha-D-muramoyl-L-alanyl-D-glutamyl-meso-2,6-diaminopimeloyl-D-alanyl-D-alanine + UMP. It participates in cell wall biogenesis; peptidoglycan biosynthesis. Its function is as follows. Catalyzes the initial step of the lipid cycle reactions in the biosynthesis of the cell wall peptidoglycan: transfers peptidoglycan precursor phospho-MurNAc-pentapeptide from UDP-MurNAc-pentapeptide onto the lipid carrier undecaprenyl phosphate, yielding undecaprenyl-pyrophosphoryl-MurNAc-pentapeptide, known as lipid I. This chain is Phospho-N-acetylmuramoyl-pentapeptide-transferase, found in Bacillus velezensis (strain DSM 23117 / BGSC 10A6 / LMG 26770 / FZB42) (Bacillus amyloliquefaciens subsp. plantarum).